The sequence spans 242 residues: Caffeoyl-CoA O-methyltransferase 3 (242 aa).

Lys16 serves as a coordination point for substrate. Residues Thr58, Glu80, 82–83 (GV), Ser88, Asp106, and Ala135 contribute to the S-adenosyl-L-methionine site. A substrate-binding site is contributed by Asp158. Residue Asp158 participates in a divalent metal cation binding. Asp160 serves as a coordination point for S-adenosyl-L-methionine. A divalent metal cation is bound by residues Asp184 and Asn185. Asn189 contacts substrate.

The protein belongs to the class I-like SAM-binding methyltransferase superfamily. Cation-dependent O-methyltransferase family. CCoAMT subfamily. Mg(2+) serves as cofactor. Mostly expressed in the bottom and middle parts of the stems.

The catalysed reaction is (E)-caffeoyl-CoA + S-adenosyl-L-methionine = (E)-feruloyl-CoA + S-adenosyl-L-homocysteine + H(+). Its pathway is aromatic compound metabolism; phenylpropanoid biosynthesis. Functionally, methylates caffeoyl-CoA to feruloyl-CoA and 5-hydroxyferuloyl-CoA to sinapoyl-CoA. Plays a role in the synthesis of feruloylated polysaccharides. Involved in the reinforcement of the plant cell wall. Also involved in the responding to wounding or pathogen challenge by the increased formation of cell wall-bound ferulic acid polymers. Also methylates free caffeic and 5-hydroxyferulic acids. The protein is Caffeoyl-CoA O-methyltransferase 3 (CCOAOMT3) of Nicotiana tabacum (Common tobacco).